Here is a 399-residue protein sequence, read N- to C-terminus: Subtilisin-like protease CPC735_033790 (399 aa).

A signal peptide spans 1 to 20 (MGFLSSAILLLITAFPAAQA). Positions 21 to 117 (GEMINAAAGA…VEPDRMVNIT (97 aa)) are excised as a propeptide. An Inhibitor I9 domain is found at 37 to 116 (SYIVVMNEGI…YVEPDRMVNI (80 aa)). A glycan (N-linked (GlcNAc...) asparagine) is linked at N115. The Peptidase S8 domain maps to 127 to 399 (SYGLGRISNK…NRLLYNNSGV (273 aa)). Active-site charge relay system residues include D159 and H190. A glycan (N-linked (GlcNAc...) asparagine) is linked at N251. S345 acts as the Charge relay system in catalysis. N395 carries an N-linked (GlcNAc...) asparagine glycan.

The protein belongs to the peptidase S8 family.

Its subcellular location is the secreted. Secreted subtilisin-like serine protease with keratinolytic activity that contributes to pathogenicity. The protein is Subtilisin-like protease CPC735_033790 of Coccidioides posadasii (strain C735) (Valley fever fungus).